Here is a 99-residue protein sequence, read N- to C-terminus: Large ribosomal subunit protein bL21 (99 aa).

The protein belongs to the bacterial ribosomal protein bL21 family. In terms of assembly, part of the 50S ribosomal subunit. Contacts protein L20.

In terms of biological role, this protein binds to 23S rRNA in the presence of protein L20. The chain is Large ribosomal subunit protein bL21 from Mesoplasma florum (strain ATCC 33453 / NBRC 100688 / NCTC 11704 / L1) (Acholeplasma florum).